The following is a 490-amino-acid chain: MSEVTKNSLEKILPQLKCHFTWNLFKEESVSRDLEDRVCNQIEFLNTEFKATMYNLLAYIKHLDGNNEAALECLRQAEELIQQEHADQAEIRSLVTWGNYVWVYYHLGRLSDAQIYVDKVKQTCKKFSNPYSIEYSELDCEEGWTQLKCGRNERAKVCFEKALEEKPNNPEFSSGLAIAMYHLDNNPEKQFSTDVLKQAIELSPDNQYVKVLLGLKLQKMNKEAEGEQFVEEALEKAPCQTDVLRSAAKFYRRKGDLDKAIELFQRVLESTPNNGYLYHQIGCCYKAKVRQMQNTGESEASGNKEMIEALKQYAMDYSNKALEKGLNPLNAYSDCAEFLETECYQTPFNKEVPDAEKQQSHQRYCNLQKYNGKSEDTAVQHGLEGLSISKKSTDKEEIKDQPQNVSENLLPQNAPNYWYLQGLIHKQNGDLLQAAKCYEKELGRLLRDAPSGIGSIFLSASELEDGSEEMGQGAVSSSPRELLSNSEQLN.

TPR repeat units lie at residues 51–84, 94–127, 136–169, 172–206, 207–240, and 241–274; these read ATMYNLLAYIKHLDGNNEAALECLRQAEELIQQE, LVTWGNYVWVYYHLGRLSDAQIYVDKVKQTCKKF, SELDCEEGWTQLKCGRNERAKVCFEKALEEKPNN, FSSGLAIAMYHLDNNPEKQFSTDVLKQAIELSPDN, QYVKVLLGLKLQKMNKEAEGEQFVEEALEKAPCQ, and TDVLRSAAKFYRRKGDLDKAIELFQRVLESTPNN. Position 203 is a phosphoserine (Ser-203). Residues 386–409 are disordered; sequence LSISKKSTDKEEIKDQPQNVSENL. The span at 391-400 shows a compositional bias: basic and acidic residues; that stretch reads KSTDKEEIKD. 2 TPR repeats span residues 415–448 and 450–481; these read PNYWYLQGLIHKQNGDLLQAAKCYEKELGRLLRD and PSGIGSIFLSASELEDGSEEMGQGAVSSSPRE. The segment at 467–490 is disordered; sequence SEEMGQGAVSSSPRELLSNSEQLN. The span at 474–490 shows a compositional bias: polar residues; the sequence is AVSSSPRELLSNSEQLN. Position 478 is a phosphoserine (Ser-478).

Belongs to the IFIT family. As to quaternary structure, component of an interferon-dependent multiprotein complex, at least composed of IFIT1, IFIT2 and IFIT3. Interacts with IFIT1 and IFIT2. Interacts (via N-terminus) with MAVS, TBK1, TRAF6 and RIGI. Interacts with COPS5.

The protein resides in the cytoplasm. It localises to the mitochondrion. Functionally, IFN-induced antiviral protein which acts as an inhibitor of cellular as well as viral processes, cell migration, proliferation, signaling, and viral replication. Enhances MAVS-mediated host antiviral responses by serving as an adapter bridging TBK1 to MAVS which leads to the activation of TBK1 and phosphorylation of IRF3 and phosphorylated IRF3 translocates into nucleus to promote antiviral gene transcription. Exhibits an antiproliferative activity via the up-regulation of cell cycle negative regulators CDKN1A/p21 and CDKN1B/p27. Normally, CDKN1B/p27 turnover is regulated by COPS5, which binds CDKN1B/p27 in the nucleus and exports it to the cytoplasm for ubiquitin-dependent degradation. IFIT3 sequesters COPS5 in the cytoplasm, thereby increasing nuclear CDKN1B/p27 protein levels. Up-regulates CDKN1A/p21 by down-regulating MYC, a repressor of CDKN1A/p21. Can negatively regulate the apoptotic effects of IFIT2. The polypeptide is Interferon-induced protein with tetratricopeptide repeats 3 (IFIT3) (Pan troglodytes (Chimpanzee)).